The following is a 159-amino-acid chain: 2-C-methyl-D-erythritol 2,4-cyclodiphosphate synthase (159 aa).

Residues aspartate 10 and histidine 12 each coordinate a divalent metal cation. 4-CDP-2-C-methyl-D-erythritol 2-phosphate contacts are provided by residues 10-12 (DVH) and 36-37 (HS). Histidine 44 provides a ligand contact to a divalent metal cation. 4-CDP-2-C-methyl-D-erythritol 2-phosphate contacts are provided by residues 58 to 60 (DIG), 63 to 67 (FANTD), 134 to 137 (TTNE), and arginine 144.

Belongs to the IspF family. In terms of assembly, homotrimer. It depends on a divalent metal cation as a cofactor.

It carries out the reaction 4-CDP-2-C-methyl-D-erythritol 2-phosphate = 2-C-methyl-D-erythritol 2,4-cyclic diphosphate + CMP. It functions in the pathway isoprenoid biosynthesis; isopentenyl diphosphate biosynthesis via DXP pathway; isopentenyl diphosphate from 1-deoxy-D-xylulose 5-phosphate: step 4/6. Involved in the biosynthesis of isopentenyl diphosphate (IPP) and dimethylallyl diphosphate (DMAPP), two major building blocks of isoprenoid compounds. Catalyzes the conversion of 4-diphosphocytidyl-2-C-methyl-D-erythritol 2-phosphate (CDP-ME2P) to 2-C-methyl-D-erythritol 2,4-cyclodiphosphate (ME-CPP) with a corresponding release of cytidine 5-monophosphate (CMP). In Cytophaga hutchinsonii (strain ATCC 33406 / DSM 1761 / CIP 103989 / NBRC 15051 / NCIMB 9469 / D465), this protein is 2-C-methyl-D-erythritol 2,4-cyclodiphosphate synthase.